The following is an 868-amino-acid chain: Dolichyl-phosphooligosaccharide-protein glycotransferase 3 (868 aa).

The Cytoplasmic segment spans residues 1-16 (MQNAESWFKKYWHLSV). A helical membrane pass occupies residues 17 to 36 (LVIAALISVKLRILNPWNSV). Topologically, residues 37 to 101 (FTWTVRLGGN…IAGIIFSATS (65 aa)) are extracellular. The DXD motif 1 motif lies at 45-47 (GND). D47 provides a ligand contact to Mn(2+). H81 contributes to the a glycophospholipid binding site. Residues 102–131 (GESLRAVLAFIPAIGGVLAILPVYLLTREV) form a helical membrane-spanning segment. The Cytoplasmic segment spans residues 132–133 (FD). A helical transmembrane segment spans residues 134–153 (KRAAVIAAFLIAIVPGQFLQ). Over 154-162 (RSILGFNDH) the chain is Extracellular. D161 is a Mn(2+) binding site. A DXD motif 2 motif is present at residues 161-163 (DHH). H162 is a binding site for a glycophospholipid. H163 contacts Mn(2+). Residues 163–184 (HIWEAFWQVSALGTFLLAYNRW) form a helical membrane-spanning segment. At 185 to 199 (KGHDLSHNLTARQMA) the chain is on the cytoplasmic side. The helical transmembrane segment at 200-212 (YPVIAGITIGLYV) threads the bilayer. The Extracellular segment spans residues 213–215 (LSW). The helical transmembrane segment at 216-238 (GAGFIIAPIILAFMFFAFVLAGF) threads the bilayer. Topologically, residues 239 to 241 (VNA) are cytoplasmic. Residues 242–262 (DRKNLSLVAVVTFAVSALIYL) form a helical membrane-spanning segment. Topologically, residues 263-279 (PFAFNYPGFSTIFYSPF) are extracellular. Residues 280-303 (QLLVLLGSAVIAAAFYQIEKWNDV) traverse the membrane as a helical segment. The Cytoplasmic segment spans residues 304–312 (GFFERVGLG). The chain crosses the membrane as a helical span at residues 313–330 (RKGMPLAVIVLTALIMGL). Residues 331–373 (FFVISPDFARNLLSVVRVVQPKGGALTIAEVYPFFFTHNGEFT) lie on the Extracellular side of the membrane. The short motif at 357–360 (TIAE) is the TIXE motif element. Residues 374–396 (LTNAVLHFGALFFFGMAGILYSA) traverse the membrane as a helical segment. The Cytoplasmic segment spans residues 397–404 (YRFLKRRS). The chain crosses the membrane as a helical span at residues 405–423 (FPEMALLIWAIAMFIALWG). Residues 424 to 427 (QNRF) are Extracellular-facing. An a glycophospholipid-binding site is contributed by R426. A helical membrane pass occupies residues 428–452 (AYYFAAVSAVYSALALSVVFDKLHL). Over 453-468 (YRALENAIGARNKLSY) the chain is Cytoplasmic. The chain crosses the membrane as a helical span at residues 469–494 (FRVAFALLIALAAIYPTYILADAQSS). Residues 495 to 868 (YAGGPNKQWY…QNGEIIQLDL (374 aa)) lie on the Extracellular side of the membrane. The tract at residues 550-552 (WWD) is interacts with target acceptor peptide in protein substrate. The short motif at 550-554 (WWDYG) is the WWDYG motif element. Residues 613-622 (EMETGKYYAM) carry the DKi motif motif.

It belongs to the STT3 family. Requires Mg(2+) as cofactor. It depends on Mn(2+) as a cofactor. Zn(2+) is required as a cofactor.

It localises to the cell membrane. The catalysed reaction is an archaeal dolichyl phosphooligosaccharide + [protein]-L-asparagine = an archaeal dolichyl phosphate + a glycoprotein with the oligosaccharide chain attached by N-beta-D-glycosyl linkage to a protein L-asparagine.. It functions in the pathway protein modification; protein glycosylation. Oligosaccharyl transferase (OST) that catalyzes the initial transfer of a defined glycan (a glucose-linked heptasaccharide composed of 3 Glc, 2 Man, 2 Gal and a sulfate for A.fulgidus AglB-L) from the lipid carrier dolichol-monophosphate to an asparagine residue within an Asn-X-Ser/Thr consensus motif in nascent polypeptide chains, the first step in protein N-glycosylation. The polypeptide is Dolichyl-phosphooligosaccharide-protein glycotransferase 3 (aglB3) (Archaeoglobus fulgidus (strain ATCC 49558 / DSM 4304 / JCM 9628 / NBRC 100126 / VC-16)).